The chain runs to 238 residues: Endonuclease V (238 aa).

Residues aspartate 46 and aspartate 116 each coordinate Mg(2+).

The protein belongs to the endonuclease V family. It depends on Mg(2+) as a cofactor.

Its subcellular location is the cytoplasm. It carries out the reaction Endonucleolytic cleavage at apurinic or apyrimidinic sites to products with a 5'-phosphate.. Functionally, DNA repair enzyme involved in the repair of deaminated bases. Selectively cleaves double-stranded DNA at the second phosphodiester bond 3' to a deoxyinosine leaving behind the intact lesion on the nicked DNA. The polypeptide is Endonuclease V (Bacillus velezensis (strain DSM 23117 / BGSC 10A6 / LMG 26770 / FZB42) (Bacillus amyloliquefaciens subsp. plantarum)).